The following is a 309-amino-acid chain: NAD-dependent protein deacylase sirtuin-5B, mitochondrial (309 aa).

Residues 1–35 (MILLPFHTRRLVSHVYCGLKPASQNKGIALEMTRP) constitute a mitochondrion transit peptide. Residues 36 to 306 (SSNLANFREA…PPALARHETE (271 aa)) enclose the Deacetylase sirtuin-type domain. 57–76 (GAGVSAESGVPTIIGAGGYW) serves as a coordination point for NAD(+). 2 residues coordinate substrate: Tyr101 and Arg104. 139 to 142 (QNID) contributes to the NAD(+) binding site. His157 serves as the catalytic Proton acceptor. Positions 165, 168, 206, and 211 each coordinate Zn(2+). NAD(+) is bound by residues 248-250 (GTS), 274-276 (NME), and Cys292.

This sequence belongs to the sirtuin family. Class III subfamily. The cofactor is Zn(2+).

The protein localises to the mitochondrion. Its subcellular location is the cytoplasm. The protein resides in the cytosol. It localises to the nucleus. The enzyme catalyses N(6)-malonyl-L-lysyl-[protein] + NAD(+) + H2O = 2''-O-malonyl-ADP-D-ribose + nicotinamide + L-lysyl-[protein]. It carries out the reaction N(6)-succinyl-L-lysyl-[protein] + NAD(+) + H2O = 2''-O-succinyl-ADP-D-ribose + nicotinamide + L-lysyl-[protein]. It catalyses the reaction N(6)-glutaryl-L-lysyl-[protein] + NAD(+) + H2O = 2''-O-glutaryl-ADP-D-ribose + nicotinamide + L-lysyl-[protein]. Its function is as follows. NAD-dependent lysine demalonylase, desuccinylase and deglutarylase that specifically removes malonyl, succinyl and glutaryl groups on target proteins. Has weak NAD-dependent protein deacetylase activity; however this activity may not be physiologically relevant in vivo. This is NAD-dependent protein deacylase sirtuin-5B, mitochondrial (sirt5-b) from Xenopus laevis (African clawed frog).